The following is a 326-amino-acid chain: tRNA-modifying protein YgfZ (326 aa).

Folate contacts are provided by tryptophan 27 and tryptophan 189.

Belongs to the tRNA-modifying YgfZ family.

It is found in the cytoplasm. Its function is as follows. Folate-binding protein involved in regulating the level of ATP-DnaA and in the modification of some tRNAs. It is probably a key factor in regulatory networks that act via tRNA modification, such as initiation of chromosomal replication. The sequence is that of tRNA-modifying protein YgfZ from Escherichia coli O139:H28 (strain E24377A / ETEC).